A 156-amino-acid polypeptide reads, in one-letter code: Deoxyuridine 5'-triphosphate nucleotidohydrolase (156 aa).

Residues 76–78 (RSG), N89, 93–95 (TVD), and K103 contribute to the substrate site.

The protein belongs to the dUTPase family. Requires Mg(2+) as cofactor.

The catalysed reaction is dUTP + H2O = dUMP + diphosphate + H(+). It functions in the pathway pyrimidine metabolism; dUMP biosynthesis; dUMP from dCTP (dUTP route): step 2/2. Functionally, this enzyme is involved in nucleotide metabolism: it produces dUMP, the immediate precursor of thymidine nucleotides and it decreases the intracellular concentration of dUTP so that uracil cannot be incorporated into DNA. This is Deoxyuridine 5'-triphosphate nucleotidohydrolase from Rhizobium johnstonii (strain DSM 114642 / LMG 32736 / 3841) (Rhizobium leguminosarum bv. viciae).